Here is a 303-residue protein sequence, read N- to C-terminus: MESALPSIFTLVIIAEFIIGNLSNGFIVLINCIDWVSKRELSSVDKLLIILAISRIGLIWEILVSWFLALHYLAIFVSGTGLRIMIFSWIVSNHFNLWLATIFSIFYLLKIASFSSPAFLYLKWRVNKVILMILLGTLVFLFLNLIQINMHIKDWLDRYERNTTWNFSMSDFETFSVSVKFTMTMFSLTPFTVAFISFLLLIFSLQKHLQKMQLNYKGHRDPRTKVHTNALKIVISFLLFYASFFLCVLISWISELYQNTVIYMLCETIGVFSPSSHSFLLILGNAKLRQAFLLVAAKVWAKR.

Over 1–7 (MESALPS) the chain is Extracellular. A helical transmembrane segment spans residues 8-28 (IFTLVIIAEFIIGNLSNGFIV). At 29–55 (LINCIDWVSKRELSSVDKLLIILAISR) the chain is on the cytoplasmic side. Residues 56–76 (IGLIWEILVSWFLALHYLAIF) form a helical membrane-spanning segment. Topologically, residues 77–85 (VSGTGLRIM) are extracellular. A helical membrane pass occupies residues 86 to 106 (IFSWIVSNHFNLWLATIFSIF). The Cytoplasmic segment spans residues 107–128 (YLLKIASFSSPAFLYLKWRVNK). The chain crosses the membrane as a helical span at residues 129 to 149 (VILMILLGTLVFLFLNLIQIN). Residues 150 to 184 (MHIKDWLDRYERNTTWNFSMSDFETFSVSVKFTMT) lie on the Extracellular side of the membrane. N-linked (GlcNAc...) asparagine glycosylation is found at N162 and N166. A helical membrane pass occupies residues 185 to 205 (MFSLTPFTVAFISFLLLIFSL). Residues 206–232 (QKHLQKMQLNYKGHRDPRTKVHTNALK) are Cytoplasmic-facing. Residues 233–253 (IVISFLLFYASFFLCVLISWI) form a helical membrane-spanning segment. The Extracellular segment spans residues 254 to 261 (SELYQNTV). A helical membrane pass occupies residues 262–282 (IYMLCETIGVFSPSSHSFLLI). Residues 283 to 303 (LGNAKLRQAFLLVAAKVWAKR) lie on the Cytoplasmic side of the membrane.

Belongs to the G-protein coupled receptor T2R family. In terms of tissue distribution, expressed in subsets of taste receptor cells of the tongue and palate epithelium and exclusively in gustducin-positive cells.

It localises to the membrane. Its function is as follows. Receptor that may play a role in the perception of bitterness and is gustducin-linked. May play a role in sensing the chemical composition of the gastrointestinal content. The activity of this receptor may stimulate alpha gustducin, mediate PLC-beta-2 activation and lead to the gating of TRPM5. The chain is Taste receptor type 2 member 13 (TAS2R13) from Homo sapiens (Human).